Reading from the N-terminus, the 302-residue chain is uncharacterized protein (302 aa).

Residue Glu-47 is part of the active site.

Belongs to the PhzF family.

This is an uncharacterized protein from Mesorhizobium japonicum (strain LMG 29417 / CECT 9101 / MAFF 303099) (Mesorhizobium loti (strain MAFF 303099)).